Consider the following 325-residue polypeptide: Lipoyl synthase (325 aa).

The interval 1–33 (MATVIDTLKARGSEDRAARHPEKQNRPDTPVLR) is disordered. Residues 8–33 (LKARGSEDRAARHPEKQNRPDTPVLR) are compositionally biased toward basic and acidic residues. The [4Fe-4S] cluster site is built by Cys64, Cys69, Cys75, Cys90, Cys94, Cys97, and Ser303. In terms of domain architecture, Radical SAM core spans 76–292 (WSQKHATMMI…EAIARAKGFL (217 aa)).

This sequence belongs to the radical SAM superfamily. Lipoyl synthase family. It depends on [4Fe-4S] cluster as a cofactor.

The protein localises to the cytoplasm. The catalysed reaction is [[Fe-S] cluster scaffold protein carrying a second [4Fe-4S](2+) cluster] + N(6)-octanoyl-L-lysyl-[protein] + 2 oxidized [2Fe-2S]-[ferredoxin] + 2 S-adenosyl-L-methionine + 4 H(+) = [[Fe-S] cluster scaffold protein] + N(6)-[(R)-dihydrolipoyl]-L-lysyl-[protein] + 4 Fe(3+) + 2 hydrogen sulfide + 2 5'-deoxyadenosine + 2 L-methionine + 2 reduced [2Fe-2S]-[ferredoxin]. The protein operates within protein modification; protein lipoylation via endogenous pathway; protein N(6)-(lipoyl)lysine from octanoyl-[acyl-carrier-protein]: step 2/2. Catalyzes the radical-mediated insertion of two sulfur atoms into the C-6 and C-8 positions of the octanoyl moiety bound to the lipoyl domains of lipoate-dependent enzymes, thereby converting the octanoylated domains into lipoylated derivatives. This Caulobacter vibrioides (strain ATCC 19089 / CIP 103742 / CB 15) (Caulobacter crescentus) protein is Lipoyl synthase.